The sequence spans 410 residues: 3-phosphoshikimate 1-carboxyvinyltransferase (410 aa).

Lys21, Ser22, and Arg26 together coordinate 3-phosphoshikimate. A phosphoenolpyruvate-binding site is contributed by Lys21. Gly69 and Arg97 together coordinate phosphoenolpyruvate. Residues Ser143, Ser144, Gln145, Ser171, Asp288, and Lys315 each coordinate 3-phosphoshikimate. Gln145 lines the phosphoenolpyruvate pocket. Residue Asp288 is the Proton acceptor of the active site. Arg319, Arg364, and Lys389 together coordinate phosphoenolpyruvate.

Belongs to the EPSP synthase family. In terms of assembly, monomer.

The protein resides in the cytoplasm. The catalysed reaction is 3-phosphoshikimate + phosphoenolpyruvate = 5-O-(1-carboxyvinyl)-3-phosphoshikimate + phosphate. The protein operates within metabolic intermediate biosynthesis; chorismate biosynthesis; chorismate from D-erythrose 4-phosphate and phosphoenolpyruvate: step 6/7. In terms of biological role, catalyzes the transfer of the enolpyruvyl moiety of phosphoenolpyruvate (PEP) to the 5-hydroxyl of shikimate-3-phosphate (S3P) to produce enolpyruvyl shikimate-3-phosphate and inorganic phosphate. The polypeptide is 3-phosphoshikimate 1-carboxyvinyltransferase (Bacteroides fragilis (strain ATCC 25285 / DSM 2151 / CCUG 4856 / JCM 11019 / LMG 10263 / NCTC 9343 / Onslow / VPI 2553 / EN-2)).